The following is a 245-amino-acid chain: Orotidine 5'-phosphate decarboxylase (245 aa).

Residues aspartate 22, lysine 44, 71-80, threonine 131, arginine 192, glutamine 201, glycine 221, and arginine 222 contribute to the substrate site; that span reads DLKFHDIPNT. Lysine 73 (proton donor) is an active-site residue.

Belongs to the OMP decarboxylase family. Type 1 subfamily. Homodimer.

The catalysed reaction is orotidine 5'-phosphate + H(+) = UMP + CO2. Its pathway is pyrimidine metabolism; UMP biosynthesis via de novo pathway; UMP from orotate: step 2/2. In terms of biological role, catalyzes the decarboxylation of orotidine 5'-monophosphate (OMP) to uridine 5'-monophosphate (UMP). The polypeptide is Orotidine 5'-phosphate decarboxylase (Escherichia coli (strain 55989 / EAEC)).